Reading from the N-terminus, the 62-residue chain is Protein sigN176 (62 aa).

This is Protein sigN176 from Dictyostelium discoideum (Social amoeba).